We begin with the raw amino-acid sequence, 453 residues long: MDLLKLNRSLQGPGPGSGSSLCRPGVSLLNSSSAGNLSCETPRIRGTGTRELELTIRITLYAVIFLMSVGGNVLIIVVLGLSRRLRTVTNAFLLSLAVSDLLLAVACMPFTLLPNLMGTFIFGTVICKAVSYLMGVSVSVSTLNLAAIALERYSAICRPLQARVWQTRSHAARVILATWLLSGLLMVPYPVYTVVQPVGPRILQCMHLWPSERVQQMWSVLLLILLFFIPGVVMAVAYGLISRELYLGLRFDGDNDSETQSRVRNQGGLPGGAAAPGPVHQNGGCRHVTSLTGEDSDGCYVQLPRSRLEMTTLTTPTTGPGPGPRPNQAKLLAKKRVVRMLLVIVLLFFVCWLPVYSANTWRAFDGPGARRALAGAPISFIHLLSYTSACANPLVYCFMHRRFRQACLDTCARCCPRPPRARPRPLPDEDPPTPSIASLSRLSYTTISTLGPG.

Residues 1–57 (MDLLKLNRSLQGPGPGSGSSLCRPGVSLLNSSSAGNLSCETPRIRGTGTRELELTIR) lie on the Extracellular side of the membrane. 3 N-linked (GlcNAc...) asparagine glycosylation sites follow: Asn7, Asn30, and Asn36. A helical transmembrane segment spans residues 58 to 79 (ITLYAVIFLMSVGGNVLIIVVL). The Cytoplasmic portion of the chain corresponds to 80-87 (GLSRRLRT). Residues 88 to 109 (VTNAFLLSLAVSDLLLAVACMP) traverse the membrane as a helical segment. Topologically, residues 110-131 (FTLLPNLMGTFIFGTVICKAVS) are extracellular. Cys127 and Cys205 are joined by a disulfide. Residues 132 to 150 (YLMGVSVSVSTLNLAAIAL) form a helical membrane-spanning segment. The Cytoplasmic segment spans residues 151 to 170 (ERYSAICRPLQARVWQTRSH). A helical membrane pass occupies residues 171–189 (AARVILATWLLSGLLMVPY). Residues 190–219 (PVYTVVQPVGPRILQCMHLWPSERVQQMWS) are Extracellular-facing. A helical transmembrane segment spans residues 220–242 (VLLLILLFFIPGVVMAVAYGLIS). Residues 243-339 (RELYLGLRFD…KLLAKKRVVR (97 aa)) are Cytoplasmic-facing. The tract at residues 257–276 (SETQSRVRNQGGLPGGAAAP) is disordered. The chain crosses the membrane as a helical span at residues 340-361 (MLLVIVLLFFVCWLPVYSANTW). Over 362–379 (RAFDGPGARRALAGAPIS) the chain is Extracellular. A helical membrane pass occupies residues 380 to 400 (FIHLLSYTSACANPLVYCFMH). Topologically, residues 401 to 453 (RRFRQACLDTCARCCPRPPRARPRPLPDEDPPTPSIASLSRLSYTTISTLGPG) are cytoplasmic. A lipid anchor (S-palmitoyl cysteine) is attached at Cys414.

This sequence belongs to the G-protein coupled receptor 1 family.

It is found in the cell membrane. In terms of biological role, receptor for gastrin and cholecystokinin. The CCK-B receptors occur throughout the central nervous system where they modulate anxiety, analgesia, arousal, and neuroleptic activity. This receptor mediates its action by association with G proteins that activate a phosphatidylinositol-calcium second messenger system. The polypeptide is Gastrin/cholecystokinin type B receptor (Cckbr) (Mus musculus (Mouse)).